Here is a 2347-residue protein sequence, read N- to C-terminus: Proto-oncogene tyrosine-protein kinase ROS (2347 aa).

The first 27 residues, Met1–Cys27, serve as a signal peptide directing secretion. Topologically, residues Thr28–Glu1859 are extracellular. Asn52, Asn114, and Asn123 each carry an N-linked (GlcNAc...) asparagine glycan. Fibronectin type-III domains are found at residues Leu101 to Thr196 and Ala197 to Ala285. N-linked (GlcNAc...) asparagine glycosylation is found at Asn324, Asn352, Asn396, Asn471, Asn607, Asn628, Asn706, Asn714, Asn732, Asn939, Asn961, Asn1015, Asn1087, Asn1090, Asn1095, Asn1211, Asn1272, Asn1330, Asn1458, Asn1461, Asn1474, Asn1499, Asn1565, Asn1669, Asn1715, Asn1738, and Asn1808. The 115-residue stretch at Leu557–Pro671 folds into the Fibronectin type-III 3 domain. Fibronectin type-III domains lie at Ile947–Ser1042 and Ala1043–Ile1150. Fibronectin type-III domains follow at residues Asp1450–Gly1556, Val1557–Phe1656, Thr1658–Gly1751, and Val1752–Asp1854. Residues Thr1860–Trp1882 form a helical membrane-spanning segment. The Cytoplasmic portion of the chain corresponds to His1883 to Asp2347. The region spanning Leu1945–Phe2222 is the Protein kinase domain. Residues Leu1951–Val1959 and Lys1980 each bind ATP. The active-site Proton acceptor is Asp2079. At Tyr2274 the chain carries Phosphotyrosine; by autocatalysis. Positions Gly2284–Ala2311 are disordered. Positions Gly2301 to Ala2311 are enriched in basic and acidic residues. Tyr2334 carries the post-translational modification Phosphotyrosine; by autocatalysis.

The protein belongs to the protein kinase superfamily. Tyr protein kinase family. Insulin receptor subfamily. Interacts with PTPN6 (via SH2 1 domain); the interaction is direct and promotes ROS1 dephosphorylation. Interacts with PTPN11; may activate the PI3 kinase-mTOR signaling pathway. Interacts with VAV3; constitutive interaction mediating VAV3 phosphorylation. Post-translationally, phosphorylated. Probably autophosphorylates. Phosphorylation at Tyr-2274 is required for the interaction with PTPN6 that mediates ROS1 dephosphorylation. Phosphorylation at Tyr-2274 stimulates the kinase activity and the activation of the ERK1 signaling cascade. Phosphorylation at Tyr-2274 and/or Tyr-2334 recruits PTPN11. In terms of tissue distribution, expressed in brain. Expression is increased in primary gliomas.

It localises to the cell membrane. It catalyses the reaction L-tyrosyl-[protein] + ATP = O-phospho-L-tyrosyl-[protein] + ADP + H(+). Inhibited by dephosphorylation by PTPN6. Its function is as follows. Receptor tyrosine kinase (RTK) that plays a role in epithelial cell differentiation and regionalization of the proximal epididymal epithelium. NELL2 is an endogenous ligand for ROS1. Upon endogenous stimulation by NELL2, ROS1 activates the intracellular signaling pathway and triggers epididymal epithelial differentiation and subsequent sperm maturation. May activate several downstream signaling pathways related to cell differentiation, proliferation, growth and survival including the PI3 kinase-mTOR signaling pathway. Mediates the phosphorylation of PTPN11, an activator of this pathway. May also phosphorylate and activate the transcription factor STAT3 to control anchorage-independent cell growth. Mediates the phosphorylation and the activation of VAV3, a guanine nucleotide exchange factor regulating cell morphology. May activate other downstream signaling proteins including AKT1, MAPK1, MAPK3, IRS1 and PLCG2. This Homo sapiens (Human) protein is Proto-oncogene tyrosine-protein kinase ROS (ROS1).